A 49-amino-acid chain; its full sequence is DNA-directed RNA polymerase subunit Rpo12 (49 aa).

Residues Cys11, Cys27, and Cys30 each contribute to the Zn(2+) site.

Belongs to the archaeal Rpo12/eukaryotic RPC10 RNA polymerase subunit family. In terms of assembly, part of the RNA polymerase complex. It depends on Zn(2+) as a cofactor.

The protein localises to the cytoplasm. It localises to the chromosome. It catalyses the reaction RNA(n) + a ribonucleoside 5'-triphosphate = RNA(n+1) + diphosphate. Its function is as follows. DNA-dependent RNA polymerase (RNAP) catalyzes the transcription of DNA into RNA using the four ribonucleoside triphosphates as substrates. The chain is DNA-directed RNA polymerase subunit Rpo12 from Thermococcus kodakarensis (strain ATCC BAA-918 / JCM 12380 / KOD1) (Pyrococcus kodakaraensis (strain KOD1)).